Consider the following 144-residue polypeptide: Large ribosomal subunit protein uL16 (144 aa).

Positions 1 to 16 (MLIPKRVKYRKQHRGR) are enriched in basic residues. Residues 1-23 (MLIPKRVKYRKQHRGRPGGGMAK) are disordered.

It belongs to the universal ribosomal protein uL16 family. In terms of assembly, part of the 50S ribosomal subunit.

Functionally, binds 23S rRNA and is also seen to make contacts with the A and possibly P site tRNAs. This chain is Large ribosomal subunit protein uL16, found in Pelotomaculum thermopropionicum (strain DSM 13744 / JCM 10971 / SI).